We begin with the raw amino-acid sequence, 318 residues long: Aspartate carbamoyltransferase catalytic subunit (318 aa).

Arginine 64 and threonine 65 together coordinate carbamoyl phosphate. Residue lysine 92 coordinates L-aspartate. 3 residues coordinate carbamoyl phosphate: arginine 114, histidine 142, and glutamine 145. Arginine 176 and arginine 230 together coordinate L-aspartate. Carbamoyl phosphate is bound by residues glycine 271 and proline 272.

The protein belongs to the aspartate/ornithine carbamoyltransferase superfamily. ATCase family. Heterododecamer (2C3:3R2) of six catalytic PyrB chains organized as two trimers (C3), and six regulatory PyrI chains organized as three dimers (R2).

The enzyme catalyses carbamoyl phosphate + L-aspartate = N-carbamoyl-L-aspartate + phosphate + H(+). It functions in the pathway pyrimidine metabolism; UMP biosynthesis via de novo pathway; (S)-dihydroorotate from bicarbonate: step 2/3. Functionally, catalyzes the condensation of carbamoyl phosphate and aspartate to form carbamoyl aspartate and inorganic phosphate, the committed step in the de novo pyrimidine nucleotide biosynthesis pathway. The polypeptide is Aspartate carbamoyltransferase catalytic subunit (Desulfovibrio desulfuricans (strain ATCC 27774 / DSM 6949 / MB)).